Reading from the N-terminus, the 329-residue chain is Small ribosomal subunit protein RACK1 (329 aa).

WD repeat units follow at residues 19-59 (GHNG…ATSP), 68-107 (GHSH…STRL), 110-149 (GHTQ…KFTL), 154-193 (AHQD…CNHT), 196-235 (DHTG…PLYK), 237-275 (EARN…VLAE), and 295-328 (PKAP…KSSS).

Belongs to the WD repeat G protein beta family. Ribosomal protein RACK1 subfamily.

The chain is Small ribosomal subunit protein RACK1 (gpbB) from Dictyostelium discoideum (Social amoeba).